The following is a 948-amino-acid chain: Valine--tRNA ligase (948 aa).

Residues 40–50 carry the 'HIGH' region motif; sequence PNVTGSLHMGH. A 'KMSKS' region motif is present at residues 551 to 555; that stretch reads KMSKS. Position 554 (Lys-554) interacts with ATP. A coiled-coil region spans residues 879–945; it reads LIDKGAELAR…GKLAEQHARI (67 aa).

This sequence belongs to the class-I aminoacyl-tRNA synthetase family. ValS type 1 subfamily. As to quaternary structure, monomer.

It localises to the cytoplasm. The enzyme catalyses tRNA(Val) + L-valine + ATP = L-valyl-tRNA(Val) + AMP + diphosphate. In terms of biological role, catalyzes the attachment of valine to tRNA(Val). As ValRS can inadvertently accommodate and process structurally similar amino acids such as threonine, to avoid such errors, it has a 'posttransfer' editing activity that hydrolyzes mischarged Thr-tRNA(Val) in a tRNA-dependent manner. The chain is Valine--tRNA ligase from Pseudomonas syringae pv. tomato (strain ATCC BAA-871 / DC3000).